The chain runs to 432 residues: Adenylosuccinate synthetase (432 aa).

Residues 12-18 (GDEGKGK) and 40-42 (GHT) contribute to the GTP site. Residue Asp13 is the Proton acceptor of the active site. Asp13 and Gly40 together coordinate Mg(2+). IMP-binding positions include 13–16 (DEGK), 38–41 (NAGH), Thr129, Arg143, Gln224, Thr239, and Arg303. The active-site Proton donor is His41. 299–305 (VTTGRRR) contributes to the substrate binding site. Residues Arg305, 331-333 (KLD), and 413-415 (GVG) contribute to the GTP site.

This sequence belongs to the adenylosuccinate synthetase family. Homodimer. Mg(2+) is required as a cofactor.

Its subcellular location is the cytoplasm. The catalysed reaction is IMP + L-aspartate + GTP = N(6)-(1,2-dicarboxyethyl)-AMP + GDP + phosphate + 2 H(+). It functions in the pathway purine metabolism; AMP biosynthesis via de novo pathway; AMP from IMP: step 1/2. Functionally, plays an important role in the de novo pathway of purine nucleotide biosynthesis. Catalyzes the first committed step in the biosynthesis of AMP from IMP. The chain is Adenylosuccinate synthetase from Mycolicibacterium paratuberculosis (strain ATCC BAA-968 / K-10) (Mycobacterium paratuberculosis).